Here is a 640-residue protein sequence, read N- to C-terminus: DNA mismatch repair protein MutL (640 aa).

The disordered stretch occupies residues 343–389; the sequence is TKNTATDQRAENLEVKPDSKEKELQPKESQHPRLVACDLPSGKIMPP. Residues 350–373 are compositionally biased toward basic and acidic residues; the sequence is QRAENLEVKPDSKEKELQPKESQH.

It belongs to the DNA mismatch repair MutL/HexB family.

Functionally, this protein is involved in the repair of mismatches in DNA. It is required for dam-dependent methyl-directed DNA mismatch repair. May act as a 'molecular matchmaker', a protein that promotes the formation of a stable complex between two or more DNA-binding proteins in an ATP-dependent manner without itself being part of a final effector complex. This chain is DNA mismatch repair protein MutL, found in Desulforamulus reducens (strain ATCC BAA-1160 / DSM 100696 / MI-1) (Desulfotomaculum reducens).